The primary structure comprises 410 residues: Transposase for insertion sequence element IS801 (410 aa).

It belongs to the transposase 32 family.

In terms of biological role, involved in the transposition of the insertion sequence. This is Transposase for insertion sequence element IS801 from Pseudomonas savastanoi pv. phaseolicola (Pseudomonas syringae pv. phaseolicola).